We begin with the raw amino-acid sequence, 499 residues long: GTPase Der (499 aa).

One can recognise an EngA-type G 1 domain in the interval 3 to 166 (PVIALVGRPN…QALGIFPKDN (164 aa)). Residues 9-16 (GRPNVGKS), 56-60 (DTGGI), and 118-121 (NKVD) each bind GTP. Residues 166–199 (NADENAEGEEGGELAEGEEVVAEGQEPKRIPGPS) form a disordered region. Residues 168-186 (DENAEGEEGGELAEGEEVV) are compositionally biased toward acidic residues. The span at 190–199 (QEPKRIPGPS) shows a compositional bias: basic and acidic residues. The region spanning 204 to 377 (IKIAIIGRPN…SVQAAFKSAI (174 aa)) is the EngA-type G 2 domain. GTP is bound by residues 210-217 (GRPNVGKS), 257-261 (DTAGV), and 322-325 (NKWD). A KH-like domain is found at 378–462 (TRWPTSRLTQ…PIRIEYKGGD (85 aa)). The segment covering 459 to 472 (KGGDNPYEGKKNTL) has biased composition (basic and acidic residues). The interval 459 to 499 (KGGDNPYEGKKNTLTDRQVNKKRRLMSHHKKAEKKRRDKKR) is disordered. Positions 478–499 (NKKRRLMSHHKKAEKKRRDKKR) are enriched in basic residues.

The protein belongs to the TRAFAC class TrmE-Era-EngA-EngB-Septin-like GTPase superfamily. EngA (Der) GTPase family. As to quaternary structure, associates with the 50S ribosomal subunit.

GTPase that plays an essential role in the late steps of ribosome biogenesis. The protein is GTPase Der of Stutzerimonas stutzeri (strain A1501) (Pseudomonas stutzeri).